Consider the following 165-residue polypeptide: Large ribosomal subunit protein uL15 (165 aa).

Positions 1–30 are enriched in basic residues; it reads MTNKKRRQRGSRTHGGGTHKNRRGAGHRGG. 2 disordered regions span residues 1–39 and 137–165; these read MTNKKRRQRGSRTHGGGTHKNRRGAGHRGGRGAAGRAKH and AGGEATLSERAEEAADESENTSDDEDDEA. Residues 150-165 show a composition bias toward acidic residues; that stretch reads AADESENTSDDEDDEA.

It belongs to the universal ribosomal protein uL15 family. Part of the 50S ribosomal subunit.

Functionally, binds to the 23S rRNA. The protein is Large ribosomal subunit protein uL15 of Halorubrum lacusprofundi (strain ATCC 49239 / DSM 5036 / JCM 8891 / ACAM 34).